A 193-amino-acid chain; its full sequence is Xanthine phosphoribosyltransferase (193 aa).

Leucine 20 and threonine 27 together coordinate xanthine. 128 to 132 is a 5-phospho-alpha-D-ribose 1-diphosphate binding site; that stretch reads ANGQA. Residue lysine 156 coordinates xanthine.

Belongs to the purine/pyrimidine phosphoribosyltransferase family. Xpt subfamily. Homodimer.

It localises to the cytoplasm. The catalysed reaction is XMP + diphosphate = xanthine + 5-phospho-alpha-D-ribose 1-diphosphate. It functions in the pathway purine metabolism; XMP biosynthesis via salvage pathway; XMP from xanthine: step 1/1. Its function is as follows. Converts the preformed base xanthine, a product of nucleic acid breakdown, to xanthosine 5'-monophosphate (XMP), so it can be reused for RNA or DNA synthesis. This chain is Xanthine phosphoribosyltransferase, found in Streptococcus pneumoniae serotype 4 (strain ATCC BAA-334 / TIGR4).